We begin with the raw amino-acid sequence, 191 residues long: UPF0302 protein SA1295 (191 aa).

It belongs to the UPF0302 family.

This chain is UPF0302 protein SA1295, found in Staphylococcus aureus (strain N315).